Reading from the N-terminus, the 859-residue chain is Heterogeneous nuclear ribonucleoprotein U-like protein 1 (859 aa).

Residues 1-103 are necessary for interaction with HRMT1L1; it reads MDVRRLKVNE…GPDGHYVMDN (103 aa). Positions 3–37 constitute an SAP domain; it reads VRRLKVNELREELQRRGLDTRGLKAELAERLLAAL. A disordered region spans residues 36–131; the sequence is ALEAEEPEDE…SSYDRRPLDM (96 aa). The span at 38-54 shows a compositional bias: acidic residues; it reads EAEEPEDERELEADDDP. Residues 77 to 88 show a composition bias toward pro residues; sequence QPPPPGLQPHPE. Residue K117 forms a Glycyl lysine isopeptide (Lys-Gly) (interchain with G-Cter in SUMO1); alternate linkage. K117 is covalently cross-linked (Glycyl lysine isopeptide (Lys-Gly) (interchain with G-Cter in SUMO2); alternate). Residues 118–130 show a composition bias toward basic and acidic residues; sequence QENESSYDRRPLD. K143 participates in a covalent cross-link: Glycyl lysine isopeptide (Lys-Gly) (interchain with G-Cter in SUMO1); alternate. A Glycyl lysine isopeptide (Lys-Gly) (interchain with G-Cter in SUMO2); alternate cross-link involves residue K143. Positions 146–206 are disordered; the sequence is MKQEAPPSFL…QPPAEEDEDD (61 aa). Glycyl lysine isopeptide (Lys-Gly) (interchain with G-Cter in SUMO2) cross-links involve residues K147 and K163. The segment covering 174-193 has biased composition (basic and acidic residues); it reads RPFEENRGRGYFEHREDRRG. The region spanning 192–389 is the B30.2/SPRY domain; sequence RGRSPQPPAE…VEFNFGQRAE (198 aa). S195 is modified (phosphoserine). Residue T210 is modified to Phosphothreonine. The necessary for interaction with TP53 stretch occupies residues 214 to 859; sequence IDTYNCDLHF…GSTQGGTSTQ (646 aa). Glycyl lysine isopeptide (Lys-Gly) (interchain with G-Cter in SUMO2) cross-links involve residues K271 and K450. The necessary for interaction with BRD7 and transcriptional activation stretch occupies residues 457–595; that stretch reads NAIMDKMRVM…EEADKLVRQY (139 aa). S513 is modified (phosphoserine). K540 is covalently cross-linked (Glycyl lysine isopeptide (Lys-Gly) (interchain with G-Cter in SUMO2)). Over residues 595–612 the composition is skewed to basic and acidic residues; that stretch reads YNEEGRKAGPPPEKRFDS. The interval 595 to 814 is disordered; that stretch reads YNEEGRKAGP…PPTAQTYPQP (220 aa). Repeat copies occupy residues 613–615, 620–622, 639–641, 645–647, and 659–661. Gly residues-rich tracts occupy residues 613-626 and 634-670; these read RGGG…GGGF and PPGG…GGGY. The tract at residues 613–661 is 5 X 3 AA repeats of R-G-G; that stretch reads RGGGFRGRGGGGGFQRYDNRGPPGGNRGGFQNRGGGGGSGGGGGNYRGG. The interval 613–661 is necessary for transcription repression; that stretch reads RGGGFRGRGGGGGFQRYDNRGPPGGNRGGFQNRGGGGGSGGGGGNYRGG. At R639 the chain carries Asymmetric dimethylarginine. Asymmetric dimethylarginine; alternate occurs at positions 645 and 659. Omega-N-methylarginine; alternate is present on residues R645 and R659. 2 positions are modified to omega-N-methylarginine: R664 and R674. Low complexity predominate over residues 671–696; sequence NQNRWGNNNRDNNNSNNRGNYNRAPQ. Over residues 697–720 the composition is skewed to pro residues; that stretch reads QQPPPQQPPPPQPPPQQPPPPPSY. S721 is modified (phosphoserine). Positions 728 to 744 are enriched in polar residues; the sequence is GASSYNKNSNIPGSSAN. Positions 745 to 775 are enriched in low complexity; sequence TSTPTVSSYTPPQPSYSQPPYNQGGYTQGYT. 2 stretches are compositionally biased toward pro residues: residues 776–786 and 796–807; these read APPPPPPPPPA and NPAPYTPPPPPT.

Interacts with BRD7, PRMT2, TP53 and NXF1. Associates with histones and BRD7. Methylated.

It is found in the nucleus. Acts as a basic transcriptional regulator. Represses basic transcription driven by several virus and cellular promoters. When associated with BRD7, activates transcription of glucocorticoid-responsive promoter in the absence of ligand-stimulation. Also plays a role in mRNA processing and transport. Binds avidly to poly(G) and poly(C) RNA homopolymers in vitro. This chain is Heterogeneous nuclear ribonucleoprotein U-like protein 1 (Hnrnpul1), found in Mus musculus (Mouse).